Here is a 716-residue protein sequence, read N- to C-terminus: 1,4-alpha-glucan branching enzyme GlgB (716 aa).

Asp-399 acts as the Nucleophile in catalysis. Glu-452 serves as the catalytic Proton donor.

Belongs to the glycosyl hydrolase 13 family. GlgB subfamily. In terms of assembly, monomer.

The catalysed reaction is Transfers a segment of a (1-&gt;4)-alpha-D-glucan chain to a primary hydroxy group in a similar glucan chain.. It functions in the pathway glycan biosynthesis; glycogen biosynthesis. Functionally, catalyzes the formation of the alpha-1,6-glucosidic linkages in glycogen by scission of a 1,4-alpha-linked oligosaccharide from growing alpha-1,4-glucan chains and the subsequent attachment of the oligosaccharide to the alpha-1,6 position. The chain is 1,4-alpha-glucan branching enzyme GlgB from Rhodopseudomonas palustris (strain ATCC BAA-98 / CGA009).